A 270-amino-acid polypeptide reads, in one-letter code: Type III pantothenate kinase (270 aa).

19–26 is an ATP binding site; that stretch reads DIGNTSTT. Substrate is bound by residues Tyr109 and 116-119; that span reads GADR. Asp118 functions as the Proton acceptor in the catalytic mechanism. Residue Asp139 participates in K(+) binding. Thr142 contributes to the ATP binding site. Residue Thr194 coordinates substrate.

This sequence belongs to the type III pantothenate kinase family. Homodimer. NH4(+) serves as cofactor. The cofactor is K(+).

Its subcellular location is the cytoplasm. The enzyme catalyses (R)-pantothenate + ATP = (R)-4'-phosphopantothenate + ADP + H(+). The protein operates within cofactor biosynthesis; coenzyme A biosynthesis; CoA from (R)-pantothenate: step 1/5. Functionally, catalyzes the phosphorylation of pantothenate (Pan), the first step in CoA biosynthesis. The sequence is that of Type III pantothenate kinase from Chlorobaculum tepidum (strain ATCC 49652 / DSM 12025 / NBRC 103806 / TLS) (Chlorobium tepidum).